The following is a 132-amino-acid chain: Peptide methionine sulfoxide reductase MsrB (132 aa).

One can recognise a MsrB domain in the interval 8-130 (LDSWREELTE…NSASLKLVPR (123 aa)). Residues Cys-47, Cys-50, Cys-96, and Cys-99 each contribute to the Zn(2+) site. Cys-119 serves as the catalytic Nucleophile.

The protein belongs to the MsrB Met sulfoxide reductase family. The cofactor is Zn(2+).

The enzyme catalyses L-methionyl-[protein] + [thioredoxin]-disulfide + H2O = L-methionyl-(R)-S-oxide-[protein] + [thioredoxin]-dithiol. This is Peptide methionine sulfoxide reductase MsrB from Pseudomonas aeruginosa (strain UCBPP-PA14).